The primary structure comprises 271 residues: Formamidopyrimidine-DNA glycosylase (271 aa).

Proline 2 (schiff-base intermediate with DNA) is an active-site residue. Residue glutamate 3 is the Proton donor of the active site. The active-site Proton donor; for beta-elimination activity is the lysine 56. Residues histidine 89, arginine 107, and arginine 151 each coordinate DNA. The segment at 236-270 (MVYARQGQPCRVCATPIKSLRQGQRSTFYCPHCQK) adopts an FPG-type zinc-finger fold. Arginine 260 (proton donor; for delta-elimination activity) is an active-site residue.

It belongs to the FPG family. Monomer. It depends on Zn(2+) as a cofactor.

The catalysed reaction is Hydrolysis of DNA containing ring-opened 7-methylguanine residues, releasing 2,6-diamino-4-hydroxy-5-(N-methyl)formamidopyrimidine.. It carries out the reaction 2'-deoxyribonucleotide-(2'-deoxyribose 5'-phosphate)-2'-deoxyribonucleotide-DNA = a 3'-end 2'-deoxyribonucleotide-(2,3-dehydro-2,3-deoxyribose 5'-phosphate)-DNA + a 5'-end 5'-phospho-2'-deoxyribonucleoside-DNA + H(+). Functionally, involved in base excision repair of DNA damaged by oxidation or by mutagenic agents. Acts as a DNA glycosylase that recognizes and removes damaged bases. Has a preference for oxidized purines, such as 7,8-dihydro-8-oxoguanine (8-oxoG). Has AP (apurinic/apyrimidinic) lyase activity and introduces nicks in the DNA strand. Cleaves the DNA backbone by beta-delta elimination to generate a single-strand break at the site of the removed base with both 3'- and 5'-phosphates. The protein is Formamidopyrimidine-DNA glycosylase of Albidiferax ferrireducens (strain ATCC BAA-621 / DSM 15236 / T118) (Rhodoferax ferrireducens).